The chain runs to 169 residues: uncharacterized protein (169 aa).

The 129-residue stretch at 35-163 (LIGRGTFILL…PYCPDSLQAL (129 aa)) folds into the Nudix hydrolase domain. A Nudix box motif is present at residues 81 to 103 (YADSAARELEEELGIRDAVLREH). Mg(2+) contacts are provided by E88 and E92.

Belongs to the Nudix hydrolase family. It depends on Mg(2+) as a cofactor.

This is an uncharacterized protein from Pseudomonas aeruginosa (strain ATCC 15692 / DSM 22644 / CIP 104116 / JCM 14847 / LMG 12228 / 1C / PRS 101 / PAO1).